The following is a 345-amino-acid chain: Phosphoribosylformylglycinamidine cyclo-ligase (345 aa).

Belongs to the AIR synthase family.

It is found in the cytoplasm. It carries out the reaction 2-formamido-N(1)-(5-O-phospho-beta-D-ribosyl)acetamidine + ATP = 5-amino-1-(5-phospho-beta-D-ribosyl)imidazole + ADP + phosphate + H(+). It participates in purine metabolism; IMP biosynthesis via de novo pathway; 5-amino-1-(5-phospho-D-ribosyl)imidazole from N(2)-formyl-N(1)-(5-phospho-D-ribosyl)glycinamide: step 2/2. In Escherichia coli O139:H28 (strain E24377A / ETEC), this protein is Phosphoribosylformylglycinamidine cyclo-ligase.